Reading from the N-terminus, the 376-residue chain is UDP-4-amino-4,6-dideoxy-N-acetyl-beta-L-altrosamine transaminase (376 aa).

Substrate is bound by residues Tyr-4, 24–27 (EILT), Ala-54, and Ser-176. Residue Lys-181 is modified to N6-(pyridoxal phosphate)lysine. Substrate-binding positions include Asn-226 and 311–314 (QVHY).

It belongs to the DegT/DnrJ/EryC1 family.

It catalyses the reaction UDP-4-amino-4,6-dideoxy-N-acetyl-beta-L-altrosamine + 2-oxoglutarate = UDP-2-acetamido-2,6-dideoxy-beta-L-arabino-hex-4-ulose + L-glutamate. Its function is as follows. Catalyzes the second step in the biosynthesis of pseudaminic acid, a sialic-acid-like sugar that is used to modify flagellin. Uses UDP-2-acetamido-2,6-dideoxy-beta-L-arabino-4-hexulose as substrate producing UDP-4-amino-4,6-dideoxy-beta-L-AltNAc. This chain is UDP-4-amino-4,6-dideoxy-N-acetyl-beta-L-altrosamine transaminase (pseC), found in Campylobacter jejuni subsp. jejuni serotype O:2 (strain ATCC 700819 / NCTC 11168).